We begin with the raw amino-acid sequence, 352 residues long: S-adenosylmethionine:tRNA ribosyltransferase-isomerase (352 aa).

This sequence belongs to the QueA family. As to quaternary structure, monomer.

It localises to the cytoplasm. It catalyses the reaction 7-aminomethyl-7-carbaguanosine(34) in tRNA + S-adenosyl-L-methionine = epoxyqueuosine(34) in tRNA + adenine + L-methionine + 2 H(+). Its pathway is tRNA modification; tRNA-queuosine biosynthesis. Functionally, transfers and isomerizes the ribose moiety from AdoMet to the 7-aminomethyl group of 7-deazaguanine (preQ1-tRNA) to give epoxyqueuosine (oQ-tRNA). This chain is S-adenosylmethionine:tRNA ribosyltransferase-isomerase, found in Allorhizobium ampelinum (strain ATCC BAA-846 / DSM 112012 / S4) (Agrobacterium vitis (strain S4)).